Reading from the N-terminus, the 96-residue chain is Phosphoribosyl-ATP pyrophosphatase (96 aa).

Belongs to the PRA-PH family.

It localises to the cytoplasm. It catalyses the reaction 1-(5-phospho-beta-D-ribosyl)-ATP + H2O = 1-(5-phospho-beta-D-ribosyl)-5'-AMP + diphosphate + H(+). It functions in the pathway amino-acid biosynthesis; L-histidine biosynthesis; L-histidine from 5-phospho-alpha-D-ribose 1-diphosphate: step 2/9. The sequence is that of Phosphoribosyl-ATP pyrophosphatase from Methanococcus maripaludis (strain DSM 14266 / JCM 13030 / NBRC 101832 / S2 / LL).